Reading from the N-terminus, the 443-residue chain is ATP-dependent protease ATPase subunit HslU (443 aa).

ATP-binding positions include V18, G60–E65, D255, E321, and R393.

The protein belongs to the ClpX chaperone family. HslU subfamily. As to quaternary structure, a double ring-shaped homohexamer of HslV is capped on each side by a ring-shaped HslU homohexamer. The assembly of the HslU/HslV complex is dependent on binding of ATP.

The protein resides in the cytoplasm. Its function is as follows. ATPase subunit of a proteasome-like degradation complex; this subunit has chaperone activity. The binding of ATP and its subsequent hydrolysis by HslU are essential for unfolding of protein substrates subsequently hydrolyzed by HslV. HslU recognizes the N-terminal part of its protein substrates and unfolds these before they are guided to HslV for hydrolysis. The polypeptide is ATP-dependent protease ATPase subunit HslU (Colwellia psychrerythraea (strain 34H / ATCC BAA-681) (Vibrio psychroerythus)).